Reading from the N-terminus, the 367-residue chain is Glutamate 5-kinase (367 aa).

Lysine 8 is a binding site for ATP. Substrate contacts are provided by serine 49, aspartate 136, and asparagine 148. Residues 168 to 169 and 210 to 216 contribute to the ATP site; these read TD and TGGMATK. Positions 275–353 constitute a PUA domain; it reads TGKLYLDRGA…EEIPTILGYS (79 aa).

Belongs to the glutamate 5-kinase family.

It localises to the cytoplasm. It catalyses the reaction L-glutamate + ATP = L-glutamyl 5-phosphate + ADP. It participates in amino-acid biosynthesis; L-proline biosynthesis; L-glutamate 5-semialdehyde from L-glutamate: step 1/2. Functionally, catalyzes the transfer of a phosphate group to glutamate to form L-glutamate 5-phosphate. The protein is Glutamate 5-kinase of Cyanothece sp. (strain PCC 7425 / ATCC 29141).